The primary structure comprises 630 residues: Coiled-coil domain-containing protein 120 (630 aa).

Residues 31–70 form an involved in CYTH2-binding region; sequence RLRGLLDRQRTLQEALSLKLQELRKVCLQEAELTGQLPPE. The stretch at 109-173 forms a coiled coil; sequence ELALEALERE…LRDVRARLGL (65 aa). Composition is skewed to low complexity over residues 212–222 and 282–297; these read HSESSSLSESG and ASPT…SASS. Disordered regions lie at residues 212 to 435 and 457 to 534; these read HSES…GAPR and GGGT…NPLL. Positions 326 to 335 are enriched in polar residues; it reads RQWSGSQDSQ. 2 positions are modified to phosphoserine: Ser358 and Ser360. Low complexity predominate over residues 421–434; sequence ARPSSAAPASRGAP. Arg435 bears the Omega-N-methylarginine mark.

In terms of assembly, interacts with NIN and CEP170; leading to recruit them to centrosomes. Directly interacts with CYTH2; this interaction stabilizes CCDC120, possibly by preventing ubiquitination. Ubiquitinated; interaction with CYTH2 may prevent ubiquitination.

It localises to the cytoplasm. It is found in the cytoskeleton. Its subcellular location is the microtubule organizing center. The protein resides in the centrosome. The protein localises to the centriole. It localises to the cell projection. It is found in the neuron projection. Its subcellular location is the growth cone. The protein resides in the endosome. Functionally, centriolar protein required for centriole subdistal appendage assembly and microtubule anchoring in interphase cells. Together with CCDC68, cooperate with subdistal appendage components ODF2, NIN and CEP170 for hierarchical subdistal appendage assembly. Recruits NIN and CEP170 to centrosomes. Also required for neurite growth. Localizes CYTH2 to vesicles to allow its transport along neurites, and subsequent ARF6 activation and neurite growth. The sequence is that of Coiled-coil domain-containing protein 120 (CCDC120) from Homo sapiens (Human).